We begin with the raw amino-acid sequence, 321 residues long: MATSDMTAEGPERHGRRPAAVLIAGPTASGKSALALKLAQASGGTVINTDSMQVYRDLRIITARPTPDEEALAPHRLYGTVDAAVNFSAGAYVEAAAAALAEVRAAGRLPILIGGTGLYFKALTRGLSAVPPVPAEVRDAVRLRLDRDGVQALHAELARQDPEAAARLAPADRTRIARALEVVLATGRPLADWHQQTSPPLLPPDDVVAVFLAPDREALYARIDSRFAAMLQGGALDEVAALAERQLDPLLPAMKAHGVPALIRHLRGEITLEEAASIGAADTRHYAKRQFTWFRHQLPEFKWVRPEEADAFLNTVIPGRA.

25 to 32 (GPTASGKS) lines the ATP pocket. A substrate-binding site is contributed by 27–32 (TASGKS). The interval 50–53 (DSMQ) is interaction with substrate tRNA.

This sequence belongs to the IPP transferase family. As to quaternary structure, monomer. Requires Mg(2+) as cofactor.

It catalyses the reaction adenosine(37) in tRNA + dimethylallyl diphosphate = N(6)-dimethylallyladenosine(37) in tRNA + diphosphate. Its function is as follows. Catalyzes the transfer of a dimethylallyl group onto the adenine at position 37 in tRNAs that read codons beginning with uridine, leading to the formation of N6-(dimethylallyl)adenosine (i(6)A). The protein is tRNA dimethylallyltransferase of Rhodopseudomonas palustris (strain ATCC BAA-98 / CGA009).